The primary structure comprises 544 residues: Chaperonin GroEL 2 (544 aa).

ATP contacts are provided by residues 29–32, 86–90, Gly-413, 479–481, and Asp-495; these read TLGP, DGTTT, and NAA.

The protein belongs to the chaperonin (HSP60) family. Forms a cylinder of 14 subunits composed of two heptameric rings stacked back-to-back. Interacts with the co-chaperonin GroES.

Its subcellular location is the cytoplasm. The enzyme catalyses ATP + H2O + a folded polypeptide = ADP + phosphate + an unfolded polypeptide.. Functionally, together with its co-chaperonin GroES, plays an essential role in assisting protein folding. The GroEL-GroES system forms a nano-cage that allows encapsulation of the non-native substrate proteins and provides a physical environment optimized to promote and accelerate protein folding. This is Chaperonin GroEL 2 from Synechococcus sp. (strain WH7803).